The following is a 594-amino-acid chain: Probable translation initiation factor IF-2 (594 aa).

The 218-residue stretch at 3-220 (IRSPIVSVLG…MLMGLAQQYL (218 aa)) folds into the tr-type G domain. Residues 12 to 19 (GHVDHGKT) form a G1 region. 12-19 (GHVDHGKT) contributes to the GTP binding site. The G2 stretch occupies residues 37–41 (GITQH). The interval 76–79 (DTPG) is G3. GTP is bound by residues 76 to 80 (DTPGH) and 130 to 133 (NKID). Positions 130 to 133 (NKID) are G4. The G5 stretch occupies residues 198–200 (SAI).

The protein belongs to the TRAFAC class translation factor GTPase superfamily. Classic translation factor GTPase family. IF-2 subfamily.

In terms of biological role, function in general translation initiation by promoting the binding of the formylmethionine-tRNA to ribosomes. Seems to function along with eIF-2. This is Probable translation initiation factor IF-2 (infB) from Methanothermobacter thermautotrophicus (strain ATCC 29096 / DSM 1053 / JCM 10044 / NBRC 100330 / Delta H) (Methanobacterium thermoautotrophicum).